The sequence spans 77 residues: Blood-induced peptide 1 (77 aa).

The stretch at 38-71 forms a coiled coil; the sequence is EDFLHQENSELKKSLKNLEMENEKLKNILKTDYN.

Plays an important role in survival in host blood through increasing tolerance to stresses such as heat, salt, or cycloheximide, which is essential for virulence. This Candida albicans (strain SC5314 / ATCC MYA-2876) (Yeast) protein is Blood-induced peptide 1.